The sequence spans 465 residues: A-type ATP synthase subunit B (465 aa).

The protein belongs to the ATPase alpha/beta chains family. In terms of assembly, the A-type ATPase is composed of subunits A(3), B(3), C, D, E(1 or 2), F, H(2), I and proteolipid K(x).

The protein resides in the cell membrane. Its function is as follows. Component of the A-type ATP synthase that produces ATP from ADP in the presence of a proton gradient across the membrane. The B chain is a regulatory subunit. In Methanocaldococcus jannaschii (strain ATCC 43067 / DSM 2661 / JAL-1 / JCM 10045 / NBRC 100440) (Methanococcus jannaschii), this protein is A-type ATP synthase subunit B.